Reading from the N-terminus, the 496-residue chain is ATP synthase subunit beta 1 (496 aa).

Position 167 to 174 (167 to 174 (GGAGVGKT)) interacts with ATP. Positions 474–496 (REAAAAQQSTAQQAAPAEKEPAA) are disordered. Over residues 476–489 (AAAAQQSTAQQAAP) the composition is skewed to low complexity.

The protein belongs to the ATPase alpha/beta chains family. In terms of assembly, F-type ATPases have 2 components, CF(1) - the catalytic core - and CF(0) - the membrane proton channel. CF(1) has five subunits: alpha(3), beta(3), gamma(1), delta(1), epsilon(1). CF(0) has three main subunits: a(1), b(2) and c(9-12). The alpha and beta chains form an alternating ring which encloses part of the gamma chain. CF(1) is attached to CF(0) by a central stalk formed by the gamma and epsilon chains, while a peripheral stalk is formed by the delta and b chains.

It localises to the cell inner membrane. The enzyme catalyses ATP + H2O + 4 H(+)(in) = ADP + phosphate + 5 H(+)(out). In terms of biological role, produces ATP from ADP in the presence of a proton gradient across the membrane. The catalytic sites are hosted primarily by the beta subunits. The protein is ATP synthase subunit beta 1 of Paraburkholderia xenovorans (strain LB400).